A 119-amino-acid polypeptide reads, in one-letter code: Large ribosomal subunit protein bL20 (119 aa).

This sequence belongs to the bacterial ribosomal protein bL20 family.

Functionally, binds directly to 23S ribosomal RNA and is necessary for the in vitro assembly process of the 50S ribosomal subunit. It is not involved in the protein synthesizing functions of that subunit. The chain is Large ribosomal subunit protein bL20 from Heliobacterium modesticaldum (strain ATCC 51547 / Ice1).